The following is a 406-amino-acid chain: Tryptophan synthase beta chain (406 aa).

Lys-99 carries the N6-(pyridoxal phosphate)lysine modification.

The protein belongs to the TrpB family. In terms of assembly, tetramer of two alpha and two beta chains. Requires pyridoxal 5'-phosphate as cofactor.

It catalyses the reaction (1S,2R)-1-C-(indol-3-yl)glycerol 3-phosphate + L-serine = D-glyceraldehyde 3-phosphate + L-tryptophan + H2O. The protein operates within amino-acid biosynthesis; L-tryptophan biosynthesis; L-tryptophan from chorismate: step 5/5. The beta subunit is responsible for the synthesis of L-tryptophan from indole and L-serine. The chain is Tryptophan synthase beta chain from Rhizobium leguminosarum bv. trifolii (strain WSM2304).